Reading from the N-terminus, the 860-residue chain is Leucine--tRNA ligase (860 aa).

The short motif at 42 to 52 (PYPSGRLHMGH) is the 'HIGH' region element. Residues 619–623 (KMSKS) carry the 'KMSKS' region motif. Lysine 622 provides a ligand contact to ATP.

Belongs to the class-I aminoacyl-tRNA synthetase family.

Its subcellular location is the cytoplasm. It carries out the reaction tRNA(Leu) + L-leucine + ATP = L-leucyl-tRNA(Leu) + AMP + diphosphate. This is Leucine--tRNA ligase from Sodalis glossinidius (strain morsitans).